The following is a 446-amino-acid chain: Tubulin beta chain (446 aa).

Residues Q11, E69, S138, G142, T143, G144, N204, and N226 each contribute to the GTP site. E69 provides a ligand contact to Mg(2+). Residues 426-446 are disordered; it reads QDATAEEEGEYVEDEDEMDGM. Residues 429-446 are compositionally biased toward acidic residues; it reads TAEEEGEYVEDEDEMDGM.

The protein belongs to the tubulin family. As to quaternary structure, dimer of alpha and beta chains. A typical microtubule is a hollow water-filled tube with an outer diameter of 25 nm and an inner diameter of 15 nM. Alpha-beta heterodimers associate head-to-tail to form protofilaments running lengthwise along the microtubule wall with the beta-tubulin subunit facing the microtubule plus end conferring a structural polarity. Microtubules usually have 13 protofilaments but different protofilament numbers can be found in some organisms and specialized cells. Mg(2+) is required as a cofactor.

It is found in the cytoplasm. Its subcellular location is the cytoskeleton. In terms of biological role, tubulin is the major constituent of microtubules, a cylinder consisting of laterally associated linear protofilaments composed of alpha- and beta-tubulin heterodimers. Microtubules grow by the addition of GTP-tubulin dimers to the microtubule end, where a stabilizing cap forms. Below the cap, tubulin dimers are in GDP-bound state, owing to GTPase activity of alpha-tubulin. The chain is Tubulin beta chain from Euplotes crassus.